The chain runs to 245 residues: Probable septum site-determining protein MinC (245 aa).

Residues 113–132 (RERPLEPLVGEEKKKPEKPP) are compositionally biased toward basic and acidic residues. The tract at residues 113–138 (RERPLEPLVGEEKKKPEKPPEPTIKP) is disordered.

This sequence belongs to the MinC family. Interacts with MinD and FtsZ.

Its function is as follows. Cell division inhibitor that blocks the formation of polar Z ring septums. Rapidly oscillates between the poles of the cell to destabilize FtsZ filaments that have formed before they mature into polar Z rings. Prevents FtsZ polymerization. The protein is Probable septum site-determining protein MinC of Pseudomonas fluorescens (strain SBW25).